A 430-amino-acid chain; its full sequence is Adenylosuccinate synthetase (430 aa).

GTP-binding positions include 12 to 18 (GDEGKGK) and 40 to 42 (GHT). The active-site Proton acceptor is the aspartate 13. Positions 13 and 40 each coordinate Mg(2+). IMP-binding positions include 13–16 (DEGK), 38–41 (NAGH), threonine 128, arginine 142, glutamine 223, threonine 238, and arginine 302. The Proton donor role is filled by histidine 41. Substrate is bound at residue 298–304 (VNTGRKR). GTP-binding positions include arginine 304, 330-332 (KLD), and 412-414 (GVG).

The protein belongs to the adenylosuccinate synthetase family. In terms of assembly, homodimer. Mg(2+) is required as a cofactor.

Its subcellular location is the cytoplasm. It catalyses the reaction IMP + L-aspartate + GTP = N(6)-(1,2-dicarboxyethyl)-AMP + GDP + phosphate + 2 H(+). It participates in purine metabolism; AMP biosynthesis via de novo pathway; AMP from IMP: step 1/2. Its function is as follows. Plays an important role in the de novo pathway of purine nucleotide biosynthesis. Catalyzes the first committed step in the biosynthesis of AMP from IMP. The chain is Adenylosuccinate synthetase from Corynebacterium aurimucosum (strain ATCC 700975 / DSM 44827 / CIP 107346 / CN-1) (Corynebacterium nigricans).